Here is a 454-residue protein sequence, read N- to C-terminus: Bifunctional protein GlmU (454 aa).

Positions 1–228 (MTLPLHVVIL…PQDVEGANDP (228 aa)) are pyrophosphorylase. UDP-N-acetyl-alpha-D-glucosamine contacts are provided by residues 10–13 (LAAG), Lys24, Gln76, 81–82 (GT), 103–105 (YGD), Gly138, Glu153, Asn168, and Asn226. Asp105 is a Mg(2+) binding site. Asn226 provides a ligand contact to Mg(2+). Residues 229–249 (WQLAQLERAWQLRAARALCLQ) are linker. The interval 250 to 454 (GVRMADPARV…IEGWERPKKK (205 aa)) is N-acetyltransferase. UDP-N-acetyl-alpha-D-glucosamine is bound by residues Arg332 and Lys350. His362 serves as the catalytic Proton acceptor. Positions 365 and 376 each coordinate UDP-N-acetyl-alpha-D-glucosamine. Acetyl-CoA-binding positions include Ala379, 385–386 (NY), Ser404, Ala422, and Arg439.

This sequence in the N-terminal section; belongs to the N-acetylglucosamine-1-phosphate uridyltransferase family. It in the C-terminal section; belongs to the transferase hexapeptide repeat family. Homotrimer. Mg(2+) serves as cofactor.

The protein localises to the cytoplasm. The enzyme catalyses alpha-D-glucosamine 1-phosphate + acetyl-CoA = N-acetyl-alpha-D-glucosamine 1-phosphate + CoA + H(+). The catalysed reaction is N-acetyl-alpha-D-glucosamine 1-phosphate + UTP + H(+) = UDP-N-acetyl-alpha-D-glucosamine + diphosphate. The protein operates within nucleotide-sugar biosynthesis; UDP-N-acetyl-alpha-D-glucosamine biosynthesis; N-acetyl-alpha-D-glucosamine 1-phosphate from alpha-D-glucosamine 6-phosphate (route II): step 2/2. It participates in nucleotide-sugar biosynthesis; UDP-N-acetyl-alpha-D-glucosamine biosynthesis; UDP-N-acetyl-alpha-D-glucosamine from N-acetyl-alpha-D-glucosamine 1-phosphate: step 1/1. Its pathway is bacterial outer membrane biogenesis; LPS lipid A biosynthesis. Functionally, catalyzes the last two sequential reactions in the de novo biosynthetic pathway for UDP-N-acetylglucosamine (UDP-GlcNAc). The C-terminal domain catalyzes the transfer of acetyl group from acetyl coenzyme A to glucosamine-1-phosphate (GlcN-1-P) to produce N-acetylglucosamine-1-phosphate (GlcNAc-1-P), which is converted into UDP-GlcNAc by the transfer of uridine 5-monophosphate (from uridine 5-triphosphate), a reaction catalyzed by the N-terminal domain. The polypeptide is Bifunctional protein GlmU (Xanthomonas campestris pv. campestris (strain B100)).